A 1254-amino-acid chain; its full sequence is Vitamin B12-dependent ribonucleotide reductase (1254 aa).

Residues Ser153, 198–199, Gly230, 474–478, and 675–679 each bind substrate; these read AC, NPCSE, and PTGTI. The cysteines at positions 199 and 487 are disulfide-linked. Asn474 serves as the catalytic Proton acceptor. The active-site Cysteine radical intermediate is the Cys476. Glu478 acts as the Proton acceptor in catalysis.

Belongs to the ribonucleoside diphosphate reductase class-2 family. Adenosylcob(III)alamin serves as cofactor.

It carries out the reaction a 2'-deoxyribonucleoside 5'-diphosphate + [thioredoxin]-disulfide + H2O = a ribonucleoside 5'-diphosphate + [thioredoxin]-dithiol. In terms of biological role, catalyzes the reduction of ribonucleotides to deoxyribonucleotides. May function to provide a pool of deoxyribonucleotide precursors for DNA repair during oxygen limitation and/or for immediate growth after restoration of oxygen. This is Vitamin B12-dependent ribonucleotide reductase (nrdJ) from Bradyrhizobium diazoefficiens (strain JCM 10833 / BCRC 13528 / IAM 13628 / NBRC 14792 / USDA 110).